Here is a 377-residue protein sequence, read N- to C-terminus: MKFELDTTQGRARRGRLVFERGTVETPAFMPVGTYGTVKGMTPEEVRATGADILLGNTFHLWLRPGEEIMRKHGDLHDFMNWQRPILTDSGGFQVFSLGDIRKITEEGVHFRSPINGEKIFLDPEKSMQIQNSLGSDVVMIFDECTPYPATEDEARKSMQMSLRWAQRSRDEFDKLENPNSLFGIIQGGVYEDLRDESLKGLVDIGFDGYAVGGLAVGEPKADMHRILEHTCPQIPTDKPRYLMGVGKPEDLVEGVRRGVDMFDCVMPTRNARNGHLFTTEGVIKIRNARHRDDTSPLDDKCDCYTCKNYSRAYLYHLDRCNEILGARLNTIHNLRYYQKLMEGLRGAIETGTLDAFVEEFYTSQGREVPEVPELTD.

The Proton acceptor role is filled by aspartate 89. Residues aspartate 89–phenylalanine 93, aspartate 143, glutamine 187, and glycine 214 each bind substrate. The RNA binding stretch occupies residues glycine 245–aspartate 251. The active-site Nucleophile is aspartate 264. The interval threonine 269–arginine 273 is RNA binding; important for wobble base 34 recognition. 4 residues coordinate Zn(2+): cysteine 302, cysteine 304, cysteine 307, and histidine 333.

This sequence belongs to the queuine tRNA-ribosyltransferase family. Homodimer. Within each dimer, one monomer is responsible for RNA recognition and catalysis, while the other monomer binds to the replacement base PreQ1. Zn(2+) is required as a cofactor.

The enzyme catalyses 7-aminomethyl-7-carbaguanine + guanosine(34) in tRNA = 7-aminomethyl-7-carbaguanosine(34) in tRNA + guanine. It functions in the pathway tRNA modification; tRNA-queuosine biosynthesis. Catalyzes the base-exchange of a guanine (G) residue with the queuine precursor 7-aminomethyl-7-deazaguanine (PreQ1) at position 34 (anticodon wobble position) in tRNAs with GU(N) anticodons (tRNA-Asp, -Asn, -His and -Tyr). Catalysis occurs through a double-displacement mechanism. The nucleophile active site attacks the C1' of nucleotide 34 to detach the guanine base from the RNA, forming a covalent enzyme-RNA intermediate. The proton acceptor active site deprotonates the incoming PreQ1, allowing a nucleophilic attack on the C1' of the ribose to form the product. After dissociation, two additional enzymatic reactions on the tRNA convert PreQ1 to queuine (Q), resulting in the hypermodified nucleoside queuosine (7-(((4,5-cis-dihydroxy-2-cyclopenten-1-yl)amino)methyl)-7-deazaguanosine). In Shewanella sediminis (strain HAW-EB3), this protein is Queuine tRNA-ribosyltransferase.